The chain runs to 359 residues: Innexin inx2 (359 aa).

The Cytoplasmic segment spans residues 1 to 22; sequence MFDVFGSVKGLLKLDSVCIDNN. A helical membrane pass occupies residues 23 to 43; the sequence is LFRLHYKATVIILIAFSLLVT. The Extracellular segment spans residues 44 to 109; that stretch reads SRQYIGDPID…KDEVKYHKYY (66 aa). The helical transmembrane segment at 110–130 threads the bilayer; it reads QWVCFVLFFQAILFYIPRYLW. Over 131-180 the chain is Cytoplasmic; the sequence is KTWEGGRIKMLVLDLNSPVVNEQSKADRKKLLVDYFATNLHTQNFYAYRF. A helical membrane pass occupies residues 181-201; sequence FICEALNFVNVVGQIYFMDLF. The Extracellular portion of the chain corresponds to 202 to 266; sequence LDGEFTTYGS…VLPLNIVNEK (65 aa). A helical transmembrane segment spans residues 267–287; sequence IYVFLWFWFVILSVLTGIGLV. Over 288–359 the chain is Cytoplasmic; the sequence is YRLATAMGPQ…AKKLEGKEIV (72 aa).

This sequence belongs to the pannexin family. As to expression, widespread expression in embryo, in anterior and posterior row of neural precursors, midline precursors and in epithelial sheet of stomodeum.

It is found in the cell membrane. It localises to the cell junction. The protein localises to the gap junction. Structural components of the gap junctions. The polypeptide is Innexin inx2 (inx2) (Schistocerca americana (American grasshopper)).